Reading from the N-terminus, the 158-residue chain is Small ribosomal subunit protein uS9 (158 aa).

It belongs to the universal ribosomal protein uS9 family.

This Brucella anthropi (strain ATCC 49188 / DSM 6882 / CCUG 24695 / JCM 21032 / LMG 3331 / NBRC 15819 / NCTC 12168 / Alc 37) (Ochrobactrum anthropi) protein is Small ribosomal subunit protein uS9.